The sequence spans 200 residues: Small ribosomal subunit protein uS4 (200 aa).

The S4 RNA-binding domain maps to 92–155 (SRLDAVVYSL…QKLNIIVESV (64 aa)).

The protein belongs to the universal ribosomal protein uS4 family. Part of the 30S ribosomal subunit. Contacts protein S5. The interaction surface between S4 and S5 is involved in control of translational fidelity.

Its function is as follows. One of the primary rRNA binding proteins, it binds directly to 16S rRNA where it nucleates assembly of the body of the 30S subunit. Functionally, with S5 and S12 plays an important role in translational accuracy. This chain is Small ribosomal subunit protein uS4, found in Staphylococcus aureus (strain JH9).